Reading from the N-terminus, the 444-residue chain is Tol-Pal system protein TolB (444 aa).

Positions 1 to 31 are cleaved as a signal peptide; the sequence is MSFDLNRRQLMISAATAAGALALGPARDAFG.

This sequence belongs to the TolB family. The Tol-Pal system is composed of five core proteins: the inner membrane proteins TolA, TolQ and TolR, the periplasmic protein TolB and the outer membrane protein Pal. They form a network linking the inner and outer membranes and the peptidoglycan layer.

Its subcellular location is the periplasm. In terms of biological role, part of the Tol-Pal system, which plays a role in outer membrane invagination during cell division and is important for maintaining outer membrane integrity. In Rhodopseudomonas palustris (strain ATCC BAA-98 / CGA009), this protein is Tol-Pal system protein TolB.